Reading from the N-terminus, the 482-residue chain is G-protein coupled receptor 37-like 1 (482 aa).

The N-terminal stretch at 1-25 (MRWLWPLGVSLAVALAAGPERAPRG) is a signal peptide. Disordered regions lie at residues 25-56 (GVWLQQGGHQPVAQEQPDRSRRGAEREDAKGL) and 78-119 (PTQP…VQNP). Residues 26 to 134 (VWLQQGGHQP…ERSYGAYAVL (109 aa)) are Extracellular-facing. Residues 40–54 (QPDRSRRGAEREDAK) are compositionally biased toward basic and acidic residues. Asn105 carries an N-linked (GlcNAc...) asparagine glycan. Residues 135-155 (LLALLLFAVGIVGSLAVMCIV) form a helical membrane-spanning segment. Residues 156–167 (WHSYYLKSAWNS) lie on the Cytoplasmic side of the membrane. The helical transmembrane segment at 168 to 188 (VLASLALWDFLVLFFCLPVVT) threads the bilayer. The Extracellular segment spans residues 189 to 205 (FHEITKQRLLGAVSCRA). Residues Cys203 and Cys286 are joined by a disulfide bond. The helical transmembrane segment at 206–226 (VPFVEVSSLGVTTFSLCALGI) threads the bilayer. The Cytoplasmic segment spans residues 227 to 251 (DRFHVATSTLPKARPIEPCPSILAK). The helical transmembrane segment at 252–272 (LAVIWVGSMTLAAPELLLWQL) threads the bilayer. Residues 273–310 (VREPSPAAGTVDTCIMKPSAHLPESLYSLVLTYQNARM) lie on the Extracellular side of the membrane. A helical membrane pass occupies residues 311–331 (WWSFGCYFCLPVLFTVTCQLV). The Cytoplasmic segment spans residues 332 to 361 (TWRVRGTPGRKPESRPGPQEPRGARPSSTV). The tract at residues 338-358 (TPGRKPESRPGPQEPRGARPS) is disordered. The chain crosses the membrane as a helical span at residues 362–382 (AGLAAVHALCALPENVCNVVA). Residues 383 to 398 (AYLSAALTRQTLELLG) are Extracellular-facing. Residues 399–419 (LVTQFSTFFKAALTPLLLLCV) traverse the membrane as a helical segment. The Cytoplasmic segment spans residues 420–482 (SRPLGRAFLD…PPLLALGTPC (63 aa)). Residue Thr480 is modified to Phosphothreonine.

Belongs to the G-protein coupled receptor 1 family. In terms of assembly, interacts with the PTCH1 receptor. In terms of processing, undergoes metalloprotease-mediated cleavage which reduces its constitutive activity. Post-translationally, ubiquitinated.

It is found in the cell membrane. Its subcellular location is the cell projection. The protein localises to the cilium membrane. In terms of biological role, G-protein coupled receptor. Has been shown to bind the neuroprotective and glioprotective factor prosaposin (PSAP), leading to endocytosis followed by an ERK phosphorylation cascade. However, other studies have shown that prosaposin does not increase activity. It has been suggested that GPR37L1 is a constitutively active receptor which signals through the guanine nucleotide-binding protein G(s) subunit alpha. Participates in the regulation of postnatal cerebellar development by modulating the Shh pathway. Regulates baseline blood pressure in females and protects against cardiovascular stress in males. Mediates inhibition of astrocyte glutamate transporters and reduction in neuronal N-methyl-D-aspartate receptor activity. In Bos taurus (Bovine), this protein is G-protein coupled receptor 37-like 1 (GPR37L1).